Here is a 441-residue protein sequence, read N- to C-terminus: UDP-N-acetylglucosamine--peptide N-acetylglucosaminyltransferase stabilizing protein GtfB (441 aa).

The protein belongs to the GtfB family. In terms of assembly, forms a heterotetramer with 2 subunits each of GtfA and GtfB. Part of the accessory SecA2/SecY2 protein translocation apparatus.

The protein resides in the cell membrane. Its pathway is protein modification; protein glycosylation. Required for polymorphic O-glycosylation of the serine-rich repeat protein (SRRP) in this bacteria. A stabilizing protein that is part of the accessory SecA2/SecY2 system specifically required to export serine-rich repeat cell wall proteins encoded in the same operon. The GtfA-GtfB complex adds GlcNAc from UDP-GlcNAc to the substrate protein, attaching the first sugar residue. Stabilizes the glycosylation activity of GtfA. Has no N-acetylglucosaminyl transferase activity on its own. This chain is UDP-N-acetylglucosamine--peptide N-acetylglucosaminyltransferase stabilizing protein GtfB, found in Limosilactobacillus reuteri subsp. suis (strain ATCC 53608 / LMG 31752 / 1063) (Lactobacillus reuteri).